The chain runs to 200 residues: Small ribosomal subunit protein uS4 (200 aa).

A disordered region spans residues 22-41 (TGKELQKRPYAPGQHGPNQR). The S4 RNA-binding domain maps to 92-152 (SRLDNLVYRM…EKSRNLQVIK (61 aa)).

Belongs to the universal ribosomal protein uS4 family. Part of the 30S ribosomal subunit. Contacts protein S5. The interaction surface between S4 and S5 is involved in control of translational fidelity.

In terms of biological role, one of the primary rRNA binding proteins, it binds directly to 16S rRNA where it nucleates assembly of the body of the 30S subunit. Functionally, with S5 and S12 plays an important role in translational accuracy. This chain is Small ribosomal subunit protein uS4, found in Halalkalibacterium halodurans (strain ATCC BAA-125 / DSM 18197 / FERM 7344 / JCM 9153 / C-125) (Bacillus halodurans).